Here is a 338-residue protein sequence, read N- to C-terminus: Glycerol-3-phosphate dehydrogenase [NAD(P)+] (338 aa).

Residues serine 13, tryptophan 14, and lysine 108 each coordinate NADPH. 3 residues coordinate sn-glycerol 3-phosphate: lysine 108, glycine 139, and serine 141. An NADPH-binding site is contributed by alanine 143. Sn-glycerol 3-phosphate contacts are provided by lysine 194, aspartate 247, serine 257, arginine 258, and asparagine 259. The active-site Proton acceptor is lysine 194. Residue arginine 258 participates in NADPH binding. NADPH-binding residues include valine 282 and glutamate 284.

The protein belongs to the NAD-dependent glycerol-3-phosphate dehydrogenase family.

The protein localises to the cytoplasm. The catalysed reaction is sn-glycerol 3-phosphate + NAD(+) = dihydroxyacetone phosphate + NADH + H(+). The enzyme catalyses sn-glycerol 3-phosphate + NADP(+) = dihydroxyacetone phosphate + NADPH + H(+). It functions in the pathway membrane lipid metabolism; glycerophospholipid metabolism. Its function is as follows. Catalyzes the reduction of the glycolytic intermediate dihydroxyacetone phosphate (DHAP) to sn-glycerol 3-phosphate (G3P), the key precursor for phospholipid synthesis. This chain is Glycerol-3-phosphate dehydrogenase [NAD(P)+], found in Listeria monocytogenes serotype 4b (strain CLIP80459).